A 347-amino-acid chain; its full sequence is Quinolinate synthase (347 aa).

Iminosuccinate contacts are provided by histidine 47 and serine 68. Residue cysteine 113 participates in [4Fe-4S] cluster binding. Residues 139-141 (YAN) and serine 156 each bind iminosuccinate. Cysteine 200 is a [4Fe-4S] cluster binding site. Residues 226-228 (HPE) and threonine 243 each bind iminosuccinate. Residue cysteine 297 coordinates [4Fe-4S] cluster.

The protein belongs to the quinolinate synthase family. Type 1 subfamily. [4Fe-4S] cluster is required as a cofactor.

Its subcellular location is the cytoplasm. The catalysed reaction is iminosuccinate + dihydroxyacetone phosphate = quinolinate + phosphate + 2 H2O + H(+). It functions in the pathway cofactor biosynthesis; NAD(+) biosynthesis; quinolinate from iminoaspartate: step 1/1. In terms of biological role, catalyzes the condensation of iminoaspartate with dihydroxyacetone phosphate to form quinolinate. In Salmonella heidelberg (strain SL476), this protein is Quinolinate synthase.